The primary structure comprises 114 residues: Large ribosomal subunit protein uL22 (114 aa).

This sequence belongs to the universal ribosomal protein uL22 family. As to quaternary structure, part of the 50S ribosomal subunit.

Functionally, this protein binds specifically to 23S rRNA; its binding is stimulated by other ribosomal proteins, e.g. L4, L17, and L20. It is important during the early stages of 50S assembly. It makes multiple contacts with different domains of the 23S rRNA in the assembled 50S subunit and ribosome. Its function is as follows. The globular domain of the protein is located near the polypeptide exit tunnel on the outside of the subunit, while an extended beta-hairpin is found that lines the wall of the exit tunnel in the center of the 70S ribosome. In Streptococcus pyogenes serotype M6 (strain ATCC BAA-946 / MGAS10394), this protein is Large ribosomal subunit protein uL22.